Consider the following 562-residue polypeptide: mRNA cleavage and polyadenylation factor CLP1 (562 aa).

The interval 1 to 27 is disordered; sequence MSLPGLELSQQPIEARRAPPQPTQISL. ATP contacts are provided by residues E32, K71, and 154-159; that span reads DAGKTS. Positions 415 to 483 are disordered; it reads EDEYDPSKFD…STTPFTNLPS (69 aa). Over residues 445-479 the composition is skewed to low complexity; sequence SLQPPSGLLPGLRSELPSATTGFPSASTSSTTPFT.

Belongs to the Clp1 family. Clp1 subfamily. As to quaternary structure, component of a pre-mRNA cleavage factor complex. Interacts directly with PCF11.

The protein localises to the nucleus. Functionally, required for endonucleolytic cleavage during polyadenylation-dependent pre-mRNA 3'-end formation. This is mRNA cleavage and polyadenylation factor CLP1 from Coccidioides immitis (strain RS) (Valley fever fungus).